Consider the following 476-residue polypeptide: Homeobox protein invected (476 aa).

Disordered stretches follow at residues 1-43 (MAAV…SEDI), 273-331 (KTRY…TSGD), and 347-381 (DRPS…AFSG). Residues 23-32 (SPNTRDTTSP) show a composition bias toward polar residues. Composition is skewed to basic and acidic residues over residues 33 to 43 (ECHDDEKSEDI) and 292 to 305 (KLDE…KTPD). The segment covering 318–331 (GSNSGSTSGATSGD) has biased composition (low complexity). Residues 372–431 (EKRPRTAFSGPQLARLKHEFAENRYLTERRRQSLAAELGLAEAQIKIWFQNKRAKIKKAS) constitute a DNA-binding region (homeobox).

Belongs to the engrailed homeobox family. In terms of tissue distribution, expressed in the middle silk gland but not in the posterior silk gland during the fourth molt/fifth intermolt period.

The protein resides in the nucleus. This protein might be involved in the compartmentalization of the silk gland. The polypeptide is Homeobox protein invected (INV) (Bombyx mori (Silk moth)).